Reading from the N-terminus, the 712-residue chain is UvrABC system protein B (712 aa).

A Helicase ATP-binding domain is found at 35–421; the sequence is RRVQAGEKDV…SDGAVEQIIR (387 aa). 48–55 provides a ligand contact to ATP; the sequence is GATGTGKS. Residues 101 to 124 carry the Beta-hairpin motif; it reads YYDYYQPEAYVPQSDTYIEKDSSI. The Helicase C-terminal domain occupies 438–604; it reads QIDDLVHEIR…PLRKKINDIV (167 aa). Positions 625 to 655 are disordered; sequence TKEGKGAKAPVPALGGQKTGGAKAARGRAKE. The 36-residue stretch at 667 to 702 folds into the UVR domain; the sequence is AEQIEDLTTRMRAAAADLQFEIAARLRDEVSEMKKE.

Belongs to the UvrB family. In terms of assembly, forms a heterotetramer with UvrA during the search for lesions. Interacts with UvrC in an incision complex.

The protein resides in the cytoplasm. Functionally, the UvrABC repair system catalyzes the recognition and processing of DNA lesions. A damage recognition complex composed of 2 UvrA and 2 UvrB subunits scans DNA for abnormalities. Upon binding of the UvrA(2)B(2) complex to a putative damaged site, the DNA wraps around one UvrB monomer. DNA wrap is dependent on ATP binding by UvrB and probably causes local melting of the DNA helix, facilitating insertion of UvrB beta-hairpin between the DNA strands. Then UvrB probes one DNA strand for the presence of a lesion. If a lesion is found the UvrA subunits dissociate and the UvrB-DNA preincision complex is formed. This complex is subsequently bound by UvrC and the second UvrB is released. If no lesion is found, the DNA wraps around the other UvrB subunit that will check the other stand for damage. The protein is UvrABC system protein B of Streptomyces coelicolor (strain ATCC BAA-471 / A3(2) / M145).